The sequence spans 553 residues: Mannuronan C5-epimerase AlgE4 (553 aa).

PbH1 repeat units follow at residues 133–155 (DRDV…DPHE), 157–179 (TINL…VADY), 180–202 (LVDS…NVVT), 204–226 (THDF…VVQR), 234–256 (PSNI…LLKM), 257–279 (TSDI…RVYG), 280–301 (AQDV…AVPE), and 320–342 (TLNT…GIQE). A disordered region spans residues 367 to 427 (YGPHSTVSGE…DILDGGAGRD (61 aa)). 2 Hemolysin-type calcium-binding repeats span residues 403–420 (QGGS…DDIL) and 421–438 (DGGA…ADTF).

The protein belongs to the D-mannuronate C5-epimerase family. The cofactor is Ca(2+).

The protein resides in the secreted. It carries out the reaction [(1-&gt;4)-beta-D-mannuronosyl](n) = [alginate](n). The protein operates within glycan biosynthesis; alginate biosynthesis. With respect to regulation, inhibited by zinc. Converts beta-D-mannuronic acid (M) to alpha-L-guluronic acid (G), but introduces almost exclusively MG blocks, producing a polymer with non-gel-forming capacity. In Azotobacter vinelandii, this protein is Mannuronan C5-epimerase AlgE4.